Consider the following 1774-residue polypeptide: Collagen alpha-1(XVIII) chain (1774 aa).

A signal peptide spans 1-26; the sequence is MAPDPSRRLCLLLLLLLSCRLVPASA. Positions 27–785 are nonhelical region 1 (NC1); it reads DGNSLSPLNP…QNPGRGLIKG (759 aa). Disordered regions lie at residues 47 to 113 and 218 to 269; these read DSLE…TPAV and LPPF…LEGK. Polar residues-rich tracts occupy residues 55 to 87 and 244 to 256; these read KPQN…TPAS and LSSS…SWGN. Asn-354 and Asn-361 each carry an N-linked (GlcNAc...) asparagine glycan. Residues 365-482 enclose the FZ domain; that stretch reads TSTSRCLPLP…SQEDGYCVFI (118 aa). 5 cysteine pairs are disulfide-bonded: Cys-370/Cys-433, Cys-380/Cys-426, Cys-417/Cys-455, Cys-444/Cys-479, and Cys-448/Cys-468. The region spanning 522 to 704 is the Laminin G-like domain; sequence GPDSNSGQVA…EDRASGDFGS (183 aa). Asn-585 carries an N-linked (GlcNAc...) asparagine glycan. The tract at residues 681–1458 is disordered; sequence RVSPVHCLDE…PPGPPGAMGA (778 aa). Residues 708 to 717 are compositionally biased toward basic and acidic residues; the sequence is ESSKSHKEDT. Thr-730 is modified (phosphothreonine). Residues 786–812 are triple-helical region 1 (COL1); it reads GMKGQKGEPGAQGPPGPAGPQGPAGPV. Low complexity predominate over residues 809 to 824; the sequence is AGPVVQSPNSQPVPGA. The nonhelical region 2 (NC2) stretch occupies residues 813–822; sequence VQSPNSQPVP. In terms of domain architecture, Collagen-like 1 spans 823 to 878; the sequence is GAQGPPGPQGPPGKDGTPGRDGEPGDPGEDGRPGDTGPQGFPGTPGDVGPKGEKGD. The tract at residues 823 to 896 is triple-helical region 2 (COL2); that stretch reads GAQGPPGPQG…PGPPGPPGPS (74 aa). Basic and acidic residues predominate over residues 839–855; sequence TPGRDGEPGDPGEDGRP. Pro residues predominate over residues 884–895; that stretch reads RGPPGPPGPPGP. The nonhelical region 3 (NC3) stretch occupies residues 897–920; the sequence is FRQDKLTFIDMEGSGFSGDIESLR. O-linked (Xyl...) (chondroitin sulfate) serine glycosylation occurs at Ser-910. The triple-helical region 3 (COL3) stretch occupies residues 921–1042; the sequence is GPRGFPGPPG…PGPPGPPGPG (122 aa). A compositionally biased stretch (pro residues) spans 925–935; it reads FPGPPGPPGVP. Asn-947 carries an N-linked (GlcNAc...) asparagine glycan. Residues 951 to 963 are compositionally biased toward low complexity; sequence APGPAGLPGVPGK. 2 consecutive Collagen-like domains span residues 953–1007 and 1008–1041; these read GPAG…GSKG and DLGP…PPGP. 2 stretches are compositionally biased toward pro residues: residues 967–982 and 1026–1041; these read PGFP…PGKE and PVGP…PPGP. The interval 1043-1065 is nonhelical region 4 (NC4); that stretch reads FAAGFDDMEGSGIPLWTTARSSD. Collagen-like domains follow at residues 1066 to 1117, 1118 to 1147, 1162 to 1202, and 1216 to 1264; these read GLQG…GPKG, EKGM…PPGP, PGPE…GEPG, and QKGA…EPGD. Positions 1066–1148 are triple-helical region 4 (COL4); sequence GLQGPPGSPG…PGPPGPPGPV (83 aa). Residues 1138–1147 show a composition bias toward pro residues; the sequence is LPGPPGPPGP. A nonhelical region 5 (NC5) region spans residues 1149 to 1162; sequence IYVSSEDKAIVSTP. Residues 1163–1204 form a triple-helical region 5 (COL5) region; sequence GPEGKPGYAGFPGPAGPKGDLGSKGEQGLPGPKGEKGEPGTI. The nonhelical region 6 (NC6) stretch occupies residues 1205 to 1217; sequence FSPDGRALGHPQK. The tract at residues 1218-1290 is triple-helical region 6 (COL6); that stretch reads GAKGEPGFRG…PGPPGPPGMP (73 aa). Residues 1275-1289 show a composition bias toward pro residues; that stretch reads PGPPGPPGPPGPPGM. Residues 1291 to 1300 form a nonhelical region 7 (NC7) region; sequence IYDSNAFVES. Over residues 1301-1317 the composition is skewed to low complexity; that stretch reads GRPGLPGQQGVQGPSGP. Residues 1301 to 1333 are triple-helical region 7 (COL7); the sequence is GRPGLPGQQGVQGPSGPKGDKGEVGPPGPPGQF. Positions 1334–1345 are nonhelical region 8 (NC8); that stretch reads PIDLFHLEAEMK. Basic and acidic residues predominate over residues 1338–1362; the sequence is FHLEAEMKGDKGDRGDAGQKGERGE. The interval 1346–1369 is triple-helical region 8 (COL8); sequence GDKGDRGDAGQKGERGEPGAPGGG. The Cell attachment site signature appears at 1351–1353; the sequence is RGD. The interval 1370–1376 is nonhelical region 9 (NC9); that stretch reads FFSSSVP. 4 stretches are compositionally biased toward pro residues: residues 1376-1388, 1398-1407, 1418-1431, and 1441-1453; these read PGPP…PGIP, PPGPPGPQGP, PPGP…PSFP, and PGPP…PGPP. The triple-helical region 9 (COL9) stretch occupies residues 1377 to 1428; it reads GPPGPPGYPGIPGPKGESIRGPPGPPGPQGPPGIGYEGRQGPPGPPGPPGPP. A nonhelical region 10 (NC10) region spans residues 1429-1441; sequence SFPGPHRQTVSVP. The interval 1442-1459 is triple-helical region 10 (COL10); sequence GPPGPPGPPGPPGAMGAS. A nonhelical region 11 (NC11) region spans residues 1460–1774; that stretch reads AGQVRIWATY…ENSFMTSFSK (315 aa). The non-collagenous domain 1 association domain stretch occupies residues 1474-1519; that stretch reads DKIREVPEGWLIFVAEREELYVRVRNGFRKVLLEARTALPRGTGNE. The tract at residues 1520 to 1590 is non-collagenous domain 1 hinge region; that stretch reads VAALQPPLVQ…PPARPTLSLA (71 aa). Residues His-1591, His-1593, Asp-1595, His-1601, and Asp-1666 each contribute to the Zn(2+) site. 2 disulfide bridges follow: Cys-1623–Cys-1763 and Cys-1725–Cys-1755.

It belongs to the multiplexin collagen family. As to quaternary structure, forms homotrimers. Recombinant non-collagenous domain 1 has stronger affinity to NID1, HSPG2 and laminin-1:NID1 complex and lower affinity to FBLN1 and FBLN2 than endostatin. Monomeric. Interacts with KDR/VEGFR2. Interacts with the ITGA5:ITGB1 complex. Interacts with NID1, HSPG2, laminin-1:NID1 complex, FBLN1 and FBLN2. In terms of processing, prolines at the third position of the tripeptide repeating unit (G-X-Y) of the triple-helical regions are hydroxylated. Undergoes proteolytic processing by CTSL/cathepsin-L and elastase-like proteases to generate both non-collagenous domain 1 trimers and endostatin monomers. In tissue extracts (brain, skeletal muscle, heart, kidney, testis and liver) predominantly bands of approximately 38 kDa are detected; recombinant non-collagenous domain 1 shows similar mobility. In vitro, several proteolytic cleavage sites in the non-collagenous domain 1 hinge region generating different endostatin-like peptides are reported. Expressed in liver, kidney, lung, skeletal muscle and testis.

It is found in the secreted. The protein resides in the extracellular space. Its subcellular location is the extracellular matrix. The protein localises to the basement membrane. Probably plays a major role in determining the retinal structure as well as in the closure of the neural tube. Functionally, may regulate extracellular matrix-dependent motility and morphogenesis of endothelial and non-endothelial cells; the function requires homotrimerization and implicates MAPK signaling. Its function is as follows. Potently inhibits endothelial cell proliferation and angiogenesis. May inhibit angiogenesis by binding to the heparan sulfate proteoglycans involved in growth factor signaling. Inhibits VEGFA isoform VEGF165-induced endothelial cell proliferation and migration. Seems to inhibit VEGFA-mediated signaling by blocking the interaction of VEGFA to its receptor KDR/VEGFR2. Modulates endothelial cell migration in an integrin-dependent manner implicating integrin ITGA5:ITGB1 and to a lesser extent ITGAV:ITGB3 and ITGAV:ITGB5. May negatively regulate the activity of homotrimeric non-collagenous domain 1. The protein is Collagen alpha-1(XVIII) chain of Mus musculus (Mouse).